A 120-amino-acid polypeptide reads, in one-letter code: NAD(P)H-quinone oxidoreductase subunit 3, chloroplastic (120 aa).

3 helical membrane passes run 9-29 (IFWAFLMISSVIPILAFIISG), 64-84 (MFALVFVVFDVETVFLYPWAV), and 88-108 (VLGVSVFIEALIFVLIPVVGS).

The protein belongs to the complex I subunit 3 family. As to quaternary structure, NDH is composed of at least 16 different subunits, 5 of which are encoded in the nucleus.

It localises to the plastid. The protein resides in the chloroplast thylakoid membrane. The enzyme catalyses a plastoquinone + NADH + (n+1) H(+)(in) = a plastoquinol + NAD(+) + n H(+)(out). It carries out the reaction a plastoquinone + NADPH + (n+1) H(+)(in) = a plastoquinol + NADP(+) + n H(+)(out). NDH shuttles electrons from NAD(P)H:plastoquinone, via FMN and iron-sulfur (Fe-S) centers, to quinones in the photosynthetic chain and possibly in a chloroplast respiratory chain. The immediate electron acceptor for the enzyme in this species is believed to be plastoquinone. Couples the redox reaction to proton translocation, and thus conserves the redox energy in a proton gradient. The polypeptide is NAD(P)H-quinone oxidoreductase subunit 3, chloroplastic (Nuphar advena (Common spatterdock)).